An 89-amino-acid polypeptide reads, in one-letter code: Small ribosomal subunit protein uS15 (89 aa).

The protein belongs to the universal ribosomal protein uS15 family. Part of the 30S ribosomal subunit. Forms a bridge to the 50S subunit in the 70S ribosome, contacting the 23S rRNA.

Functionally, one of the primary rRNA binding proteins, it binds directly to 16S rRNA where it helps nucleate assembly of the platform of the 30S subunit by binding and bridging several RNA helices of the 16S rRNA. Forms an intersubunit bridge (bridge B4) with the 23S rRNA of the 50S subunit in the ribosome. The polypeptide is Small ribosomal subunit protein uS15 (Heliobacterium modesticaldum (strain ATCC 51547 / Ice1)).